We begin with the raw amino-acid sequence, 93 residues long: Uteroglobin (93 aa).

The N-terminal stretch at 1–17 is a signal peptide; sequence MKLAITIILVMLSVCYS.

Belongs to the secretoglobin family. As to quaternary structure, antiparallel homodimer; disulfide-linked. Interaction with LMBR1L is controversial.

It localises to the secreted. In terms of biological role, binds phosphatidylcholine, phosphatidylinositol, polychlorinated biphenyls (PCB) and weakly progesterone, potent inhibitor of phospholipase A2. The chain is Uteroglobin (SCGB1A1) from Neotomodon alstoni (Mexican volcano mouse).